Consider the following 403-residue polypeptide: Tryptophan synthase beta chain (403 aa).

N6-(pyridoxal phosphate)lysine is present on lysine 88.

The protein belongs to the TrpB family. In terms of assembly, tetramer of two alpha and two beta chains. Requires pyridoxal 5'-phosphate as cofactor.

It catalyses the reaction (1S,2R)-1-C-(indol-3-yl)glycerol 3-phosphate + L-serine = D-glyceraldehyde 3-phosphate + L-tryptophan + H2O. The protein operates within amino-acid biosynthesis; L-tryptophan biosynthesis; L-tryptophan from chorismate: step 5/5. Functionally, the beta subunit is responsible for the synthesis of L-tryptophan from indole and L-serine. In Shewanella frigidimarina (strain NCIMB 400), this protein is Tryptophan synthase beta chain.